Here is a 60-residue protein sequence, read N- to C-terminus: Large ribosomal subunit protein bL32 (60 aa).

Belongs to the bacterial ribosomal protein bL32 family.

This Streptococcus mutans serotype c (strain ATCC 700610 / UA159) protein is Large ribosomal subunit protein bL32.